The primary structure comprises 603 residues: Probable potassium transport system protein Kup (603 aa).

A run of 12 helical transmembrane segments spans residues 15-35 (GLVF…IFLL), 43-63 (IIGV…VEYA), 94-114 (VAFV…DGVI), 135-155 (NIGQ…LFSV), 163-183 (ITWV…FSGI), 209-229 (GIIG…GEAL), 244-264 (AWRF…AFLI), 283-303 (ILYI…SQAM), 336-356 (IYIS…MLIF), 365-385 (AYGL…TSIF), 390-410 (NITK…FLLS), and 415-435 (IPHG…LILI).

Belongs to the HAK/KUP transporter (TC 2.A.72) family.

It is found in the cell membrane. The enzyme catalyses K(+)(in) + H(+)(in) = K(+)(out) + H(+)(out). Transport of potassium into the cell. Likely operates as a K(+):H(+) symporter. This is Probable potassium transport system protein Kup from Methanosarcina barkeri (strain Fusaro / DSM 804).